A 747-amino-acid chain; its full sequence is Protein MTSS 2 (747 aa).

The IMD domain occupies 1–252; sequence METAEKECGA…EQVIKDLKGS (252 aa). Residues 135–159 adopt a coiled-coil conformation; sequence EIKKKSSDTLKLQKKARKELLGKGD. Low complexity-rich tracts occupy residues 256–284, 321–332, and 349–367; these read WSYQTPPSSPSSSSSRKSSMCSAPSSSSS, SSVSSHDSGFVS, and TSQKSSSSASSEASETCQS. 4 disordered regions span residues 256–302, 318–441, 457–522, and 543–599; these read WSYQ…YSPS, ARLS…EEVS, LEHQ…RNSN, and PTAG…PTVP. A Phosphothreonine modification is found at Thr-260. Phosphoserine is present on Ser-264. Over residues 368-378 the composition is skewed to polar residues; it reads VSECSSPTSDW. The segment covering 397–406 has biased composition (basic and acidic residues); it reads DRVELLRDTE. Position 441 is a phosphoserine (Ser-441). Over residues 466–479 the composition is skewed to low complexity; sequence SLQYSSGYSTQTTT. Polar residues predominate over residues 480 to 492; that stretch reads PSCSEDTIPSQGS. Phosphoserine is present on residues Ser-579, Ser-601, Ser-612, Ser-624, Ser-634, and Ser-639. Disordered stretches follow at residues 638–664 and 691–720; these read LSLPNTAWGSPSPEAAGYPGAGAEDEQ and GQFPFPTALSATPTEETPTPPPAATSDPPA. Phosphothreonine is present on Thr-643. 2 stretches are compositionally biased toward low complexity: residues 646–659 and 696–707; these read GSPSPEAAGYPGAG and PTALSATPTEET. Residues 719-736 form the WH2 domain; that stretch reads PAEDMLVAIRRGVRLRRT.

Belongs to the MTSS family. As to quaternary structure, interacts (via IMD domain) with RAC1; this interaction may be important to potentiate PDGF-induced RAC1 activation.

Its subcellular location is the cytoplasm. It localises to the cell projection. The protein resides in the ruffle. In terms of biological role, involved in plasma membrane dynamics. Potentiated PDGF-mediated formation of membrane ruffles and lamellipodia in fibroblasts, acting via RAC1 activation. May function in actin bundling. The protein is Protein MTSS 2 of Homo sapiens (Human).